Here is a 71-residue protein sequence, read N- to C-terminus: ATP synthase F(0) complex subunit e, mitochondrial (71 aa).

At lysine 34 the chain carries N6-acetyllysine. Serine 68 is modified (phosphoserine).

This sequence belongs to the ATPase e subunit family. As to quaternary structure, component of the ATP synthase complex composed at least of ATP5F1A/subunit alpha, ATP5F1B/subunit beta, ATP5MC1/subunit c (homooctomer), MT-ATP6/subunit a, MT-ATP8/subunit 8, ATP5ME/subunit e, ATP5MF/subunit f, ATP5MG/subunit g, ATP5MK/subunit k, ATP5MJ/subunit j, ATP5F1C/subunit gamma, ATP5F1D/subunit delta, ATP5F1E/subunit epsilon, ATP5PF/subunit F6, ATP5PB/subunit b, ATP5PD/subunit d, ATP5PO/subunit OSCP. ATP synthase complex consists of a soluble F(1) head domain (subunits alpha(3) and beta(3)) - the catalytic core - and a membrane F(0) domain - the membrane proton channel (subunits c, a, 8, e, f, g, k and j). These two domains are linked by a central stalk (subunits gamma, delta, and epsilon) rotating inside the F1 region and a stationary peripheral stalk (subunits F6, b, d, and OSCP). In terms of tissue distribution, mammary gland, liver, kidney, heart, spleen, brain and lung.

Its subcellular location is the mitochondrion. It is found in the mitochondrion inner membrane. Functionally, subunit e, of the mitochondrial membrane ATP synthase complex (F(1)F(0) ATP synthase or Complex V) that produces ATP from ADP in the presence of a proton gradient across the membrane which is generated by electron transport complexes of the respiratory chain. ATP synthase complex consist of a soluble F(1) head domain - the catalytic core - and a membrane F(1) domain - the membrane proton channel. These two domains are linked by a central stalk rotating inside the F(1) region and a stationary peripheral stalk. During catalysis, ATP synthesis in the catalytic domain of F(1) is coupled via a rotary mechanism of the central stalk subunits to proton translocation. In vivo, can only synthesize ATP although its ATP hydrolase activity can be activated artificially in vitro. Part of the complex F(0) domain. This Mus musculus (Mouse) protein is ATP synthase F(0) complex subunit e, mitochondrial.